Here is a 421-residue protein sequence, read N- to C-terminus: Testin (421 aa).

Residues 92-199 (MILTNPVAAK…GDVKLPCEMD (108 aa)) enclose the PET domain. A disordered region spans residues 133–164 (EKQPVAGSEGAQYRKKQLAKQLPAHDQDPSKC). The span at 155–164 (PAHDQDPSKC) shows a compositional bias: basic and acidic residues. LIM zinc-binding domains lie at 234–297 (YSCY…CDSE), 299–359 (PRCA…NHAV), and 362–421 (QGCH…KMMS).

This sequence belongs to the prickle / espinas / testin family. Interacts via LIM domain 1 with ZYX. Interacts (via LIM domain 3) with ENAH and VASP. Interacts with ALKBH4, talin, actin, alpha-actinin, GRIP1 and PXN. Interacts (via LIM domain 2) with ACTL7A (via N-terminus). Heterodimer with ACTL7A; the heterodimer interacts with ENAH to form a heterotrimer.

The protein resides in the cytoplasm. The protein localises to the cell junction. It is found in the focal adhesion. In terms of biological role, scaffold protein that may play a role in cell adhesion, cell spreading and in the reorganization of the actin cytoskeleton. Plays a role in the regulation of cell proliferation. May act as a tumor suppressor. This is Testin (TES) from Saimiri boliviensis boliviensis (Bolivian squirrel monkey).